The primary structure comprises 39 residues: Large ribosomal subunit protein bL36 (39 aa).

It belongs to the bacterial ribosomal protein bL36 family.

This Leuconostoc mesenteroides subsp. mesenteroides (strain ATCC 8293 / DSM 20343 / BCRC 11652 / CCM 1803 / JCM 6124 / NCDO 523 / NBRC 100496 / NCIMB 8023 / NCTC 12954 / NRRL B-1118 / 37Y) protein is Large ribosomal subunit protein bL36.